We begin with the raw amino-acid sequence, 453 residues long: Phosphoglucosamine mutase (453 aa).

Serine 108 acts as the Phosphoserine intermediate in catalysis. Residues serine 108, aspartate 247, aspartate 249, and aspartate 251 each contribute to the Mg(2+) site. Serine 108 carries the post-translational modification Phosphoserine.

Belongs to the phosphohexose mutase family. Mg(2+) serves as cofactor. Post-translationally, activated by phosphorylation.

It catalyses the reaction alpha-D-glucosamine 1-phosphate = D-glucosamine 6-phosphate. Functionally, catalyzes the conversion of glucosamine-6-phosphate to glucosamine-1-phosphate. The protein is Phosphoglucosamine mutase of Methylobacillus flagellatus (strain ATCC 51484 / DSM 6875 / VKM B-1610 / KT).